The primary structure comprises 337 residues: DNA-directed RNA polymerase subunit alpha (337 aa).

The interval 1-233 is alpha N-terminal domain (alpha-NTD); sequence MIQKNWQELI…DQLSIFVNFE (233 aa). The alpha C-terminal domain (alpha-CTD) stretch occupies residues 249-337; the sequence is FNPALLKKVD…DLAKRYEDQY (89 aa).

It belongs to the RNA polymerase alpha chain family. In terms of assembly, homodimer. The RNAP catalytic core consists of 2 alpha, 1 beta, 1 beta' and 1 omega subunit. When a sigma factor is associated with the core the holoenzyme is formed, which can initiate transcription.

It catalyses the reaction RNA(n) + a ribonucleoside 5'-triphosphate = RNA(n+1) + diphosphate. Its function is as follows. DNA-dependent RNA polymerase catalyzes the transcription of DNA into RNA using the four ribonucleoside triphosphates as substrates. This Brucella melitensis biotype 2 (strain ATCC 23457) protein is DNA-directed RNA polymerase subunit alpha.